The chain runs to 132 residues: Ribosome-binding factor A (132 aa).

A disordered region spans residues 113-132 (EANSTRAKDDDEADAPAKDD).

The protein belongs to the RbfA family. Monomer. Binds 30S ribosomal subunits, but not 50S ribosomal subunits or 70S ribosomes.

It localises to the cytoplasm. In terms of biological role, one of several proteins that assist in the late maturation steps of the functional core of the 30S ribosomal subunit. Associates with free 30S ribosomal subunits (but not with 30S subunits that are part of 70S ribosomes or polysomes). Required for efficient processing of 16S rRNA. May interact with the 5'-terminal helix region of 16S rRNA. The sequence is that of Ribosome-binding factor A from Burkholderia ambifaria (strain MC40-6).